A 911-amino-acid polypeptide reads, in one-letter code: Nitrate reductase [NADH] (911 aa).

Positions 1 to 10 (MAASVENRQY) are enriched in polar residues. The segment at 1 to 71 (MAASVENRQY…SEDEDDDDEK (71 aa)) is disordered. A compositionally biased stretch (acidic residues) spans 61–71 (SSEDEDDDDEK). Cys188 contributes to the Mo-molybdopterin binding site. The region spanning 536–611 (SKMYSMSEVR…LEDFRIGELI (76 aa)) is the Cytochrome b5 heme-binding domain. Heme-binding residues include His571 and His594. The 113-residue stretch at 654–766 (REKIPCKLVD…KGPLGHIEYQ (113 aa)) folds into the FAD-binding FR-type domain. FAD is bound by residues 706-709 (RAYT), 723-727 (VVKIY), Phe728, Phe735, 740-742 (QMS), and Thr793.

Belongs to the nitrate reductase family. Homodimer. It depends on FAD as a cofactor. Requires heme as cofactor. The cofactor is Mo-molybdopterin.

The catalysed reaction is nitrite + NAD(+) + H2O = nitrate + NADH + H(+). In terms of biological role, nitrate reductase is a key enzyme involved in the first step of nitrate assimilation in plants, fungi and bacteria. The protein is Nitrate reductase [NADH] (NIA) of Solanum lycopersicum (Tomato).